Here is a 283-residue protein sequence, read N- to C-terminus: Prolyl 4-hydroxylase 1 (283 aa).

Topologically, residues 1–6 are cytoplasmic; it reads MAPAMK. Residues 7–27 traverse the membrane as a helical; Signal-anchor for type II membrane protein segment; that stretch reads IVFGLLTFVTVGMVIGSLLQL. At 28–283 the chain is on the lumenal side; that stretch reads AFINRLEDSY…TKWMRQKATS (256 aa). A Fe2OG dioxygenase domain is found at 162–279; sequence NGELIQVLRY…KWSATKWMRQ (118 aa). Residues His-180, Asp-182, and His-260 each contribute to the Fe cation site. Lys-270 is a binding site for 2-oxoglutarate.

This sequence belongs to the P4HA family. It depends on Fe(2+) as a cofactor. Requires L-ascorbate as cofactor.

It is found in the endoplasmic reticulum membrane. It carries out the reaction L-prolyl-[collagen] + 2-oxoglutarate + O2 = trans-4-hydroxy-L-prolyl-[collagen] + succinate + CO2. In terms of biological role, catalyzes the post-translational formation of 4-hydroxyproline in -Xaa-Pro-Gly- sequences in proline-rich peptide sequences of plant glycoproteins and other proteins. Hydroxylates preferentially prolines in second positions in the -Pro-Pro-Gly-triplets. Hydroxyprolines are important constituent of many plant cell wall glycoproteins such as extensins, hydroxyproline-rich glycoproteins, lectins and arabinogalactan proteins. Can hydroxylate collagen-like peptides and hypoxia-inducible transcription factor peptides. The sequence is that of Prolyl 4-hydroxylase 1 from Arabidopsis thaliana (Mouse-ear cress).